The following is a 217-amino-acid chain: Outer-membrane lipoprotein LolB (217 aa).

An N-terminal signal peptide occupies residues 1 to 20 (MSKALRTLALSGLVLVGLSA). C21 carries the N-palmitoyl cysteine lipid modification. The S-diacylglycerol cysteine moiety is linked to residue C21.

The protein belongs to the LolB family. In terms of assembly, monomer.

It localises to the cell outer membrane. Plays a critical role in the incorporation of lipoproteins in the outer membrane after they are released by the LolA protein. This chain is Outer-membrane lipoprotein LolB, found in Xanthomonas oryzae pv. oryzae (strain MAFF 311018).